The chain runs to 52 residues: UPF0057 membrane protein PA0567 (52 aa).

Helical transmembrane passes span 6–26 (ILIAILLPPLGVFLQVGFGGA) and 29–49 (LNILLTLLGYIPGIVHAVYII).

It belongs to the UPF0057 (PMP3) family.

It localises to the cell membrane. The chain is UPF0057 membrane protein PA0567 from Pseudomonas aeruginosa (strain ATCC 15692 / DSM 22644 / CIP 104116 / JCM 14847 / LMG 12228 / 1C / PRS 101 / PAO1).